The primary structure comprises 388 residues: Nitric oxide reductase FlRd-NAD(+) reductase (388 aa).

Belongs to the FAD-dependent oxidoreductase family. Requires FAD as cofactor.

The protein localises to the cytoplasm. The enzyme catalyses 2 reduced [nitric oxide reductase rubredoxin domain] + NAD(+) + H(+) = 2 oxidized [nitric oxide reductase rubredoxin domain] + NADH. It participates in nitrogen metabolism; nitric oxide reduction. Functionally, one of at least two accessory proteins for anaerobic nitric oxide (NO) reductase. Reduces the rubredoxin moiety of NO reductase. In Aeromonas salmonicida (strain A449), this protein is Nitric oxide reductase FlRd-NAD(+) reductase.